Here is a 131-residue protein sequence, read N- to C-terminus: Aspartate 1-decarboxylase (131 aa).

The active-site Schiff-base intermediate with substrate; via pyruvic acid is the Ser25. A Pyruvic acid (Ser) modification is found at Ser25. Residue Thr57 coordinates substrate. Tyr58 (proton donor) is an active-site residue. 73 to 75 (GAA) provides a ligand contact to substrate.

This sequence belongs to the PanD family. In terms of assembly, heterooctamer of four alpha and four beta subunits. Pyruvate is required as a cofactor. Post-translationally, is synthesized initially as an inactive proenzyme, which is activated by self-cleavage at a specific serine bond to produce a beta-subunit with a hydroxyl group at its C-terminus and an alpha-subunit with a pyruvoyl group at its N-terminus.

The protein localises to the cytoplasm. It carries out the reaction L-aspartate + H(+) = beta-alanine + CO2. Its pathway is cofactor biosynthesis; (R)-pantothenate biosynthesis; beta-alanine from L-aspartate: step 1/1. Its function is as follows. Catalyzes the pyruvoyl-dependent decarboxylation of aspartate to produce beta-alanine. The sequence is that of Aspartate 1-decarboxylase from Anaeromyxobacter sp. (strain K).